The chain runs to 288 residues: HTH-type transcriptional regulator CzcR (288 aa).

The HTH lysR-type domain maps to 1–58; sequence MELRDLQIFKCVAHHKSITGAAKELNYVQSNVTARIKQLENELKTPLFNRHKKGVSLS. The H-T-H motif DNA-binding region spans 18–37; that stretch reads ITGAAKELNYVQSNVTARIK.

It belongs to the LysR transcriptional regulatory family.

The protein is HTH-type transcriptional regulator CzcR (czcR) of Bacillus subtilis (strain 168).